We begin with the raw amino-acid sequence, 296 residues long: Phosphatidylglycerol--prolipoprotein diacylglyceryl transferase (296 aa).

The next 7 helical transmembrane spans lie at 17 to 37, 59 to 79, 97 to 117, 129 to 149, 203 to 223, 230 to 250, and 265 to 285; these read LAVR…IVVG, MMFY…VLFY, GGMS…LFAW, FVAP…FING, PSQL…LFFF, LGAV…TVEF, and LSMG…LLVW. Arginine 142 is a binding site for a 1,2-diacyl-sn-glycero-3-phospho-(1'-sn-glycerol).

It belongs to the Lgt family.

The protein localises to the cell inner membrane. The catalysed reaction is L-cysteinyl-[prolipoprotein] + a 1,2-diacyl-sn-glycero-3-phospho-(1'-sn-glycerol) = an S-1,2-diacyl-sn-glyceryl-L-cysteinyl-[prolipoprotein] + sn-glycerol 1-phosphate + H(+). It functions in the pathway protein modification; lipoprotein biosynthesis (diacylglyceryl transfer). In terms of biological role, catalyzes the transfer of the diacylglyceryl group from phosphatidylglycerol to the sulfhydryl group of the N-terminal cysteine of a prolipoprotein, the first step in the formation of mature lipoproteins. The sequence is that of Phosphatidylglycerol--prolipoprotein diacylglyceryl transferase from Burkholderia ambifaria (strain MC40-6).